The chain runs to 380 residues: Protein trichome birefringence-like 38 (380 aa).

A helical; Signal-anchor for type II membrane protein membrane pass occupies residues 7 to 29; the sequence is SLLLLFLPLLTVTILSGVEQAFA. The short motif at 134-136 is the GDS motif element; it reads GDS. Positions 357–371 match the DCXHWCLPGXXDXWN motif motif; that stretch reads DCSHWCLPGLPDTWN.

The protein belongs to the PC-esterase family. TBL subfamily.

It localises to the membrane. In terms of biological role, may act as a bridging protein that binds pectin and other cell wall polysaccharides. Probably involved in maintaining esterification of pectins. May be involved in the specific O-acetylation of cell wall polymers. The polypeptide is Protein trichome birefringence-like 38 (TBL38) (Arabidopsis thaliana (Mouse-ear cress)).